The chain runs to 218 residues: Elongation factor Ts (218 aa).

The involved in Mg(2+) ion dislocation from EF-Tu stretch occupies residues 82–85; sequence TDFV.

It belongs to the EF-Ts family.

The protein resides in the cytoplasm. Functionally, associates with the EF-Tu.GDP complex and induces the exchange of GDP to GTP. It remains bound to the aminoacyl-tRNA.EF-Tu.GTP complex up to the GTP hydrolysis stage on the ribosome. The chain is Elongation factor Ts from Prochlorococcus marinus (strain MIT 9301).